The following is a 377-amino-acid chain: Presenilin-associated rhomboid-like protein, mitochondrial (377 aa).

The N-terminal 50 residues, 1–50, are a transit peptide targeting the mitochondrion; the sequence is MALYSWVQRGWRCGQTWAPLLGGGYRELSATQARQLLGRRFNLLLQQKCG. Topologically, residues 51-95 are mitochondrial matrix; it reads FRKAPRKVEPRRSDTGSSGEAYKRSALIPPLEETVFYPSPYPVRT. 2 positions are modified to phosphoserine: Ser-63 and Ser-68. A helical membrane pass occupies residues 96–116; sequence LLKPFFFTVGFTGCAFGSAAI. Topologically, residues 117 to 165 are mitochondrial intermembrane; it reads WQYESLKSRVQSYFDGIKADWLDSIRPQKEGNLRKEINKWWNSLSDGQR. Residues 166 to 186 traverse the membrane as a helical segment; sequence TVTGIIAANALVFCLWRVPSL. Topologically, residues 187 to 214 are mitochondrial matrix; sequence HRTMIRYFTSNPASKVLCSPMLLSTFSH. The chain crosses the membrane as a helical span at residues 215–235; it reads FSLFHMAANMYVLWSFSTSIV. Residues 236–242 lie on the Mitochondrial intermembrane side of the membrane; it reads NILGQEQ. A helical membrane pass occupies residues 243–263; sequence FVAVYLSAGVISNFVSYVCKV. At 264–268 the chain is on the mitochondrial matrix side; the sequence is ATGRY. Residues 269–289 form a helical membrane-spanning segment; it reads GPSLGASGAIMTVLAAVCTKI. The active-site Nucleophile is the Ser-275. Over 290–293 the chain is Mitochondrial intermembrane; the sequence is PEGR. Residues 294–314 form a helical membrane-spanning segment; it reads LAIIFLPVFTFTAGNALKAII. Residues 315–331 are Mitochondrial matrix-facing; that stretch reads AMDTAGMILGWKFFDHA. Residues 332 to 352 form a helical membrane-spanning segment; sequence AHLGGALFGIWYITYGHELIW. The active site involves His-333. At 353–377 the chain is on the mitochondrial intermembrane side; that stretch reads KNREPLVKIWHEIRTNGPKKGGGSK.

Belongs to the peptidase S54 family. Interacts with PSEN1 and PSEN2. Binds OPA1. P-beta is proteolytically processed (beta-cleavage) in a PARL-dependent manner.

It localises to the mitochondrion inner membrane. It is found in the nucleus. The enzyme catalyses Cleaves type-1 transmembrane domains using a catalytic dyad composed of serine and histidine that are contributed by different transmembrane domains.. Its function is as follows. Required for the control of apoptosis during postnatal growth. Essential for proteolytic processing of an antiapoptotic form of OPA1 which prevents the release of mitochondrial cytochrome c in response to intrinsic apoptotic signals. Required for the maturation of PINK1 into its 52kDa mature form after its cleavage by mitochondrial-processing peptidase (MPP). Promotes cleavage of serine/threonine-protein phosphatase PGAM5 in damaged mitochondria in response to loss of mitochondrial membrane potential. Mediates differential cleavage of PINK1 and PGAM5 depending on the health status of mitochondria, disassociating from PINK1 and associating with PGAM5 in response to mitochondrial membrane potential loss. Required for processing of CLPB into a form with higher protein disaggregase activity by removing an autoinhibitory N-terminal peptide. Promotes processing of DIABLO/SMAC in the mitochondrion which is required for DIABLO apoptotic activity. Also required for cleavage of STARD7 and TTC19. Promotes changes in mitochondria morphology regulated by phosphorylation of P-beta domain. The sequence is that of Presenilin-associated rhomboid-like protein, mitochondrial from Rattus norvegicus (Rat).